A 255-amino-acid polypeptide reads, in one-letter code: Small ribosomal subunit protein eS1 (255 aa).

N-acetylalanine; partial is present on Ala-2.

The protein belongs to the eukaryotic ribosomal protein eS1 family. In terms of assembly, component of the small ribosomal subunit. Mature ribosomes consist of a small (40S) and a large (60S) subunit. The 40S subunit contains about 33 different proteins and 1 molecule of RNA (18S). The 60S subunit contains about 49 different proteins and 3 molecules of RNA (25S, 5.8S and 5S).

It localises to the cytoplasm. In Kluyveromyces lactis (strain ATCC 8585 / CBS 2359 / DSM 70799 / NBRC 1267 / NRRL Y-1140 / WM37) (Yeast), this protein is Small ribosomal subunit protein eS1.